Consider the following 179-residue polypeptide: Natural killer cells antigen CD94 (179 aa).

Residues 1–10 (MAVFKTTLWR) are Cytoplasmic-facing. The helical; Signal-anchor for type II membrane protein transmembrane segment at 11–31 (LISGTLGIICLSLMATLGILL) threads the bilayer. Residues 32–179 (KNSFTKLSIE…NRYICKQQLI (148 aa)) lie on the Extracellular side of the membrane. 2 disulfide bridges follow: C58/C70 and C61/C72. The C-type lectin domain maps to 68 to 175 (YRCNCYFISS…CEDKNRYICK (108 aa)). N83 and N132 each carry an N-linked (GlcNAc...) asparagine glycan. Disulfide bonds link C89/C174 and C152/C166.

As to quaternary structure, can form disulfide-bonded heterodimer with NKG2 family members KLRC1 and KLRC2. KLRD1-KLRC1 heterodimer interacts with peptide-bound MHC-E-B2M heterotrimeric complex. KLRD1 plays a prominent role in directly interacting with MHC-E. KLRD1-KLRC1 interacts with much higher affinity with peptide-bound MHC-E-B2M than KLRD1-KLRC2. Interacts with the adapter protein TYROBP/DAP12; this interaction is required for cell surface expression and cell activation. In terms of tissue distribution, natural killer cells.

It is found in the cell membrane. In terms of biological role, immune receptor involved in self-nonself discrimination. In complex with KLRC1 or KLRC2 on cytotoxic and regulatory lymphocyte subsets, recognizes non-classical major histocompatibility (MHC) class Ib molecule MHC-E loaded with self-peptides derived from the signal sequence of classical MHC class Ia and non-classical MHC class Ib molecules. Enables cytotoxic cells to monitor the expression of MHC class I molecules in healthy cells and to tolerate self. Primarily functions as a ligand binding subunit as it lacks the capacity to signal. Functionally, KLRD1-KLRC1 acts as an immune inhibitory receptor. Key inhibitory receptor on natural killer (NK) cells that regulates their activation and effector functions. Dominantly counteracts T cell receptor signaling on a subset of memory/effector CD8-positive T cells as part of an antigen-driven response to avoid autoimmunity. On intraepithelial CD8-positive gamma-delta regulatory T cells triggers TGFB1 secretion, which in turn limits the cytotoxic programming of intraepithelial CD8-positive alpha-beta T cells, distinguishing harmless from pathogenic antigens. In MHC-E-rich tumor microenvironment, acts as an immune inhibitory checkpoint and may contribute to progressive loss of effector functions of NK cells and tumor-specific T cells, a state known as cell exhaustion. Upon MHC-E-peptide binding, transmits intracellular signals through KLRC1 immunoreceptor tyrosine-based inhibition motifs (ITIMs) by recruiting INPP5D/SHIP-1 and INPPL1/SHIP-2 tyrosine phosphatases to ITIMs, and ultimately opposing signals transmitted by activating receptors through dephosphorylation of proximal signaling molecules. Its function is as follows. KLRD1-KLRC2 acts as an immune activating receptor. On cytotoxic lymphocyte subsets recognizes MHC-E loaded with signal sequence-derived peptides from non-classical MHC class Ib MHC-G molecules, likely playing a role in the generation and effector functions of adaptive NK cells and in maternal-fetal tolerance during pregnancy. Regulates the effector functions of terminally differentiated cytotoxic lymphocyte subsets, and in particular may play a role in adaptive NK cell response to viral infection. Upon MHC-E-peptide binding, transmits intracellular signals via the adapter protein TYROBP/DAP12, triggering the phosphorylation of proximal signaling molecules and cell activation. This is Natural killer cells antigen CD94 (KLRD1) from Pan troglodytes (Chimpanzee).